Consider the following 343-residue polypeptide: Fe-S cluster assembly protein DRE2 (343 aa).

Residues 1 to 188 (MTVSRDSLVL…KKLTKKVSAI (188 aa)) are N-terminal SAM-like domain. Residues 189–240 (KLTDSDLEDDDDDLESDDSANNSKTKFFDDFDDPETGDSIDEDDLIAETEED) are linker. 2 stretches are compositionally biased toward acidic residues: residues 195–206 (LEDDDDDLESDD) and 218–228 (DFDDPETGDSI). The segment at 195-228 (LEDDDDDLESDDSANNSKTKFFDDFDDPETGDSI) is disordered. [2Fe-2S] cluster contacts are provided by Cys247, Cys258, Cys261, and Cys263. The interval 247–263 (CGKSKQRRRKACKDCSC) is fe-S binding site A. Cys306, Cys309, Cys317, and Cys320 together coordinate [4Fe-4S] cluster. Short sequence motifs (cx2C motif) lie at residues 306–309 (CGSC) and 317–320 (CSGC). Residues 306–320 (CGSCALGDAFRCSGC) are fe-S binding site B.

It belongs to the anamorsin family. As to quaternary structure, monomer. Interacts with TAH18. Interacts with MIA40. The cofactor is [2Fe-2S] cluster. [4Fe-4S] cluster serves as cofactor.

It is found in the cytoplasm. The protein localises to the mitochondrion intermembrane space. Its function is as follows. Component of the cytosolic iron-sulfur (Fe-S) protein assembly (CIA) machinery required for the maturation of extramitochondrial Fe-S proteins. Part of an electron transfer chain functioning in an early step of cytosolic Fe-S biogenesis, facilitating the de novo assembly of a [4Fe-4S] cluster on the scaffold complex CFD1-NBP35. Electrons are transferred to DRE2 from NADPH via the FAD- and FMN-containing protein TAH18. TAH18-DRE2 are also required for the assembly of the diferric tyrosyl radical cofactor of ribonucleotide reductase (RNR), probably by providing electrons for reduction during radical cofactor maturation in the catalytic small subunit RNR2. This Kluyveromyces lactis (strain ATCC 8585 / CBS 2359 / DSM 70799 / NBRC 1267 / NRRL Y-1140 / WM37) (Yeast) protein is Fe-S cluster assembly protein DRE2.